Consider the following 452-residue polypeptide: Pup--protein ligase (452 aa).

Residue Glu-9 coordinates Mg(2+). Arg-53 is an ATP binding site. A Mg(2+)-binding site is contributed by Tyr-55. The active-site Proton acceptor is Asp-57. Residue Glu-63 participates in Mg(2+) binding. Residues Thr-66 and Trp-419 each coordinate ATP.

Belongs to the Pup ligase/Pup deamidase family. Pup-conjugating enzyme subfamily.

It catalyses the reaction ATP + [prokaryotic ubiquitin-like protein]-L-glutamate + [protein]-L-lysine = ADP + phosphate + N(6)-([prokaryotic ubiquitin-like protein]-gamma-L-glutamyl)-[protein]-L-lysine.. The protein operates within protein degradation; proteasomal Pup-dependent pathway. It participates in protein modification; protein pupylation. In terms of biological role, catalyzes the covalent attachment of the prokaryotic ubiquitin-like protein modifier Pup to the proteasomal substrate proteins, thereby targeting them for proteasomal degradation. This tagging system is termed pupylation. The ligation reaction involves the side-chain carboxylate of the C-terminal glutamate of Pup and the side-chain amino group of a substrate lysine. The chain is Pup--protein ligase from Nakamurella multipartita (strain ATCC 700099 / DSM 44233 / CIP 104796 / JCM 9543 / NBRC 105858 / Y-104) (Microsphaera multipartita).